Here is a 50-residue protein sequence, read N- to C-terminus: Omwaprin-a (50 aa).

One can recognise a WAP domain in the interval 3 to 47 (RPKKPGLCPPRPQKPCVKECKNDDSCPGQQKCCNYGCKDECRDPI). 4 cysteine pairs are disulfide-bonded: Cys-10–Cys-35, Cys-18–Cys-39, Cys-22–Cys-34, and Cys-28–Cys-43.

Belongs to the venom waprin family. As to expression, expressed by the venom gland.

It localises to the secreted. Functionally, damages membranes of susceptible bacteria. Has antibacterial activity against the Gram-positive bacteria B.megaterium and S.warneri. After a 45-minute treatment with this protein, B.megaterium have no visible pili and are smooth. Has no antibacterial activity against the Gram-positive bacteria B.thuringiensis, S.aureus, S.clavuligerus and B.anthracis, or the Gram-negative bacteria E.coli and A.tumefaciens. Has no hemolytic activity. Does not inhibit the proteinases elastase and cathepsin G. Is not toxic to mice. This is Omwaprin-a from Oxyuranus microlepidotus (Inland taipan).